Consider the following 504-residue polypeptide: Anaerobic nitric oxide reductase transcription regulator NorR (504 aa).

D57 is modified (4-aspartylphosphate). The Sigma-54 factor interaction domain maps to 187–416 (MIGLSPGMTQ…LEHAIHRAVV (230 aa)). Residues 215–222 (GETGTGKE) and 278–287 (ADNGTLFLDE) each bind ATP. A DNA-binding region (H-T-H motif) is located at residues 479 to 498 (WAACARMLETDVANLHRLAK).

It functions in the pathway nitrogen metabolism; nitric oxide reduction. In terms of biological role, required for the expression of anaerobic nitric oxide (NO) reductase, acts as a transcriptional activator for at least the norVW operon. Activation also requires sigma-54. In Escherichia coli (strain K12 / MC4100 / BW2952), this protein is Anaerobic nitric oxide reductase transcription regulator NorR.